A 481-amino-acid polypeptide reads, in one-letter code: Alginate biosynthesis protein AlgA (481 aa).

Belongs to the mannose-6-phosphate isomerase type 2 family. As to quaternary structure, monomer. It depends on Co(2+) as a cofactor.

It carries out the reaction D-mannose 6-phosphate = D-fructose 6-phosphate. The enzyme catalyses alpha-D-mannose 1-phosphate + GTP + H(+) = GDP-alpha-D-mannose + diphosphate. The protein operates within nucleotide-sugar biosynthesis; GDP-alpha-D-mannose biosynthesis; GDP-alpha-D-mannose from alpha-D-mannose 1-phosphate (GTP route): step 1/1. Its pathway is nucleotide-sugar biosynthesis; GDP-alpha-D-mannose biosynthesis; alpha-D-mannose 1-phosphate from D-fructose 6-phosphate: step 1/2. Functionally, produces a precursor for alginate polymerization. The alginate layer provides a protective barrier against host immune defenses and antibiotics. In Pseudomonas aeruginosa (strain ATCC 15692 / DSM 22644 / CIP 104116 / JCM 14847 / LMG 12228 / 1C / PRS 101 / PAO1), this protein is Alginate biosynthesis protein AlgA (algA).